Reading from the N-terminus, the 235-residue chain is Purine nucleoside phosphorylase DeoD-type (235 aa).

His-4 contacts a purine D-ribonucleoside. Phosphate is bound by residues Gly-20, Arg-24, Arg-43, and 87–90; that span reads RVGT. Residues 180–182 and 204–205 contribute to the a purine D-ribonucleoside site; these read EME and SD. Asp-205 acts as the Proton donor in catalysis.

It belongs to the PNP/UDP phosphorylase family. As to quaternary structure, homohexamer; trimer of homodimers.

It carries out the reaction a purine D-ribonucleoside + phosphate = a purine nucleobase + alpha-D-ribose 1-phosphate. The catalysed reaction is a purine 2'-deoxy-D-ribonucleoside + phosphate = a purine nucleobase + 2-deoxy-alpha-D-ribose 1-phosphate. Functionally, catalyzes the reversible phosphorolytic breakdown of the N-glycosidic bond in the beta-(deoxy)ribonucleoside molecules, with the formation of the corresponding free purine bases and pentose-1-phosphate. The polypeptide is Purine nucleoside phosphorylase DeoD-type (Oceanobacillus iheyensis (strain DSM 14371 / CIP 107618 / JCM 11309 / KCTC 3954 / HTE831)).